The chain runs to 251 residues: Triosephosphate isomerase (251 aa).

Position 9 to 11 (9 to 11 (NWK)) interacts with substrate. The Electrophile role is filled by histidine 95. Glutamate 167 serves as the catalytic Proton acceptor. Substrate contacts are provided by residues glycine 173, serine 213, and 234–235 (GG). Residue serine 213 is modified to Phosphoserine.

The protein belongs to the triosephosphate isomerase family. In terms of assembly, homodimer.

It localises to the cytoplasm. It carries out the reaction D-glyceraldehyde 3-phosphate = dihydroxyacetone phosphate. The protein operates within carbohydrate biosynthesis; gluconeogenesis. Its pathway is carbohydrate degradation; glycolysis; D-glyceraldehyde 3-phosphate from glycerone phosphate: step 1/1. Its function is as follows. Involved in the gluconeogenesis. Catalyzes stereospecifically the conversion of dihydroxyacetone phosphate (DHAP) to D-glyceraldehyde-3-phosphate (G3P). This chain is Triosephosphate isomerase, found in Bacillus cereus (strain B4264).